Reading from the N-terminus, the 877-residue chain is DNA (cytosine-5)-methyltransferase 3A (877 aa).

Disordered regions lie at residues 1-154 (MVES…MQRH), 194-250 (EETP…PEYE), and 412-431 (AYAPPPPAKKPRKSTTEKPK). Composition is skewed to basic and acidic residues over residues 107-133 (KLLEATEKSKEEKEENNFDSLKMEGSR) and 195-206 (ETPRAEPQKEEE). A compositionally biased stretch (polar residues) spans 210–225 (PASQQPTDPASPNVAT). In terms of domain architecture, PWWP spans 226 to 284 (TPEPVVADAVDKNTSKSADDEPEYEDGRGLGIGELVWGKLRGFSWWPGRIVSWWMTGRS). The segment covering 234-244 (AVDKNTSKSAD) has biased composition (basic and acidic residues). Residues 447-579 (EVRQKCRNIE…LQMFFANNHD (133 aa)) form the ADD domain. The GATA-type; atypical zinc-finger motif lies at 458–488 (ICISCGSLNVTLEHPLFIGGMCQNCKNCFLE). The PHD-type; atypical zinc-finger motif lies at 499–555 (QSYCTICCGGREVLMCGNNNCCRCFCVECVDLLVGPGAAQAAIKEDPWNCYMCGHKG). Positions 599 to 877 (IRVLSLFDGI…APLKEYFACV (279 aa)) constitute an SAM-dependent MTase C5-type domain. S-adenosyl-L-methionine-binding positions include 606–610 (DGIAT), Glu-629, and 651–653 (DVR). Cys-675 is a catalytic residue. 856–858 (RSW) contacts S-adenosyl-L-methionine.

It belongs to the class I-like SAM-binding methyltransferase superfamily. C5-methyltransferase family.

It localises to the nucleus. The protein localises to the chromosome. The protein resides in the cytoplasm. It catalyses the reaction a 2'-deoxycytidine in DNA + S-adenosyl-L-methionine = a 5-methyl-2'-deoxycytidine in DNA + S-adenosyl-L-homocysteine + H(+). The catalysed reaction is L-cysteinyl-[protein] + S-adenosyl-L-methionine = S-methyl-L-cysteinyl-[protein] + S-adenosyl-L-homocysteine + H(+). Required for genome-wide de novo methylation and is essential for development. DNA methylation is coordinated with methylation of histones. It modifies DNA in a non-processive manner and also methylates non-CpG sites. Acts as a transcriptional corepressor for ZNF238. Can actively repress transcription through the recruitment of HDAC activity. Also has weak auto-methylation activity on some Cys residue in absence of DNA. This Gallus gallus (Chicken) protein is DNA (cytosine-5)-methyltransferase 3A (DNMT3A).